The sequence spans 1901 residues: Protein TIC 214 (1901 aa).

The next 6 helical transmembrane spans lie at 18–38 (IINS…FSIG), 64–84 (FITG…HLAL), 87–107 (PHTI…WNNH), 124–144 (LSIQ…HFIL), 172–192 (VGWL…LVWI), and 221–241 (IFSI…PSPI). Disordered stretches follow at residues 248-299 (EASK…EERW), 797-817 (REEQ…ENKR), and 1591-1618 (IQEA…LGPV). Acidic residues predominate over residues 256–268 (VESEEERDVEIET). Over residues 1591 to 1611 (IQEAKEPASQGEKERGSDIEN) the composition is skewed to basic and acidic residues.

It belongs to the TIC214 family. Part of the Tic complex.

Its subcellular location is the plastid. It localises to the chloroplast inner membrane. Functionally, involved in protein precursor import into chloroplasts. May be part of an intermediate translocation complex acting as a protein-conducting channel at the inner envelope. This Nicotiana sylvestris (Wood tobacco) protein is Protein TIC 214.